A 527-amino-acid polypeptide reads, in one-letter code: Glucose-6-phosphate isomerase (527 aa).

Glu-347 serves as the catalytic Proton donor. Residues His-378 and Lys-493 contribute to the active site.

It belongs to the GPI family.

Its subcellular location is the cytoplasm. The catalysed reaction is alpha-D-glucose 6-phosphate = beta-D-fructose 6-phosphate. Its pathway is carbohydrate biosynthesis; gluconeogenesis. It functions in the pathway carbohydrate degradation; glycolysis; D-glyceraldehyde 3-phosphate and glycerone phosphate from D-glucose: step 2/4. In terms of biological role, catalyzes the reversible isomerization of glucose-6-phosphate to fructose-6-phosphate. In Chlamydia caviae (strain ATCC VR-813 / DSM 19441 / 03DC25 / GPIC) (Chlamydophila caviae), this protein is Glucose-6-phosphate isomerase.